The following is a 513-amino-acid chain: 2,3-bisphosphoglycerate-independent phosphoglycerate mutase (513 aa).

2 residues coordinate Mn(2+): Asp-13 and Ser-63. Catalysis depends on Ser-63, which acts as the Phosphoserine intermediate. Residues His-124, 154 to 155, Arg-186, Arg-192, 262 to 265, and Lys-335 each bind substrate; these read RD and RADR. Mn(2+)-binding residues include Asp-402, His-406, Asp-443, His-444, and His-462.

It belongs to the BPG-independent phosphoglycerate mutase family. As to quaternary structure, monomer. Mn(2+) serves as cofactor.

The enzyme catalyses (2R)-2-phosphoglycerate = (2R)-3-phosphoglycerate. The protein operates within carbohydrate degradation; glycolysis; pyruvate from D-glyceraldehyde 3-phosphate: step 3/5. Catalyzes the interconversion of 2-phosphoglycerate and 3-phosphoglycerate. This Shewanella frigidimarina (strain NCIMB 400) protein is 2,3-bisphosphoglycerate-independent phosphoglycerate mutase.